An 813-amino-acid polypeptide reads, in one-letter code: Leucine--tRNA ligase (813 aa).

Positions 41-51 (PYPSGTLHMGH) match the 'HIGH' region motif. Positions 575-579 (KMSKS) match the 'KMSKS' region motif. Lysine 578 provides a ligand contact to ATP.

This sequence belongs to the class-I aminoacyl-tRNA synthetase family.

The protein localises to the cytoplasm. It carries out the reaction tRNA(Leu) + L-leucine + ATP = L-leucyl-tRNA(Leu) + AMP + diphosphate. The protein is Leucine--tRNA ligase of Francisella tularensis subsp. tularensis (strain FSC 198).